The following is a 482-amino-acid chain: Glutamate--tRNA ligase 2 (482 aa).

The 'HIGH' region motif lies at 16-26; the sequence is PSPTGYLHLGN. Zn(2+) is bound by residues C113, C115, C140, and H142. The 'KMSKS' region signature appears at 257 to 261; it reads PLSKR. Position 260 (K260) interacts with ATP.

It belongs to the class-I aminoacyl-tRNA synthetase family. Glutamate--tRNA ligase type 1 subfamily. As to quaternary structure, monomer. It depends on Zn(2+) as a cofactor.

It localises to the cytoplasm. It catalyses the reaction tRNA(Glu) + L-glutamate + ATP = L-glutamyl-tRNA(Glu) + AMP + diphosphate. Functionally, catalyzes the attachment of glutamate to tRNA(Glu) in a two-step reaction: glutamate is first activated by ATP to form Glu-AMP and then transferred to the acceptor end of tRNA(Glu). The polypeptide is Glutamate--tRNA ligase 2 (Acidithiobacillus ferrooxidans (strain ATCC 53993 / BNL-5-31) (Leptospirillum ferrooxidans (ATCC 53993))).